Reading from the N-terminus, the 429-residue chain is Tol-Pal system protein TolB (429 aa).

The N-terminal stretch at 1–22 is a signal peptide; the sequence is MTRRLFILITIMLCLIPALLHS. Disordered stretches follow at residues 362–383 and 407–429; these read PDGTNDTRLTSEGSNEHPRWSP and GSGQTRVSGGKGRDSHPTWSPRW. Over residues 363-374 the composition is skewed to polar residues; that stretch reads DGTNDTRLTSEG.

It belongs to the TolB family. As to quaternary structure, the Tol-Pal system is composed of five core proteins: the inner membrane proteins TolA, TolQ and TolR, the periplasmic protein TolB and the outer membrane protein Pal. They form a network linking the inner and outer membranes and the peptidoglycan layer.

The protein resides in the periplasm. Its function is as follows. Part of the Tol-Pal system, which plays a role in outer membrane invagination during cell division and is important for maintaining outer membrane integrity. This Geobacter metallireducens (strain ATCC 53774 / DSM 7210 / GS-15) protein is Tol-Pal system protein TolB.